The following is a 245-amino-acid chain: MIIPALDLIDGTVVRLHQGDYGKQRDYGNDPLPRLQDYAAQGAEVLHLVDLTGAKDPAKRQIPLIKTLVAGVNVPVQVGGGVRSEEDVAALLEAGVARVVVGSTAVKSPKMVKGWFERFGADALVLALDVRIDEQGNKQVAVSGWQENSGVSLEQLVETYLPVGLKHVLCTDISRDGTLAGSNVSLYEEVCARYPQVAFQSSGGIGDINDVAALRGTGVRGVIVGRALLEGKFTVKEAIACWQNA.

Asp-7 (proton acceptor) is an active-site residue. The Proton donor role is filled by Asp-129.

The protein belongs to the HisA/HisF family.

It is found in the cytoplasm. The enzyme catalyses 1-(5-phospho-beta-D-ribosyl)-5-[(5-phospho-beta-D-ribosylamino)methylideneamino]imidazole-4-carboxamide = 5-[(5-phospho-1-deoxy-D-ribulos-1-ylimino)methylamino]-1-(5-phospho-beta-D-ribosyl)imidazole-4-carboxamide. It functions in the pathway amino-acid biosynthesis; L-histidine biosynthesis; L-histidine from 5-phospho-alpha-D-ribose 1-diphosphate: step 4/9. In Shigella boydii serotype 18 (strain CDC 3083-94 / BS512), this protein is 1-(5-phosphoribosyl)-5-[(5-phosphoribosylamino)methylideneamino] imidazole-4-carboxamide isomerase.